Consider the following 610-residue polypeptide: Glutamine--fructose-6-phosphate aminotransferase [isomerizing] (610 aa).

Residue cysteine 2 is the Nucleophile; for GATase activity of the active site. The Glutamine amidotransferase type-2 domain maps to 2–218 (CGIVGAVAQR…EGDVAEITRH (217 aa)). SIS domains follow at residues 286–426 (AADI…LKGR) and 459–600 (LSED…VDQP). Lysine 605 functions as the For Fru-6P isomerization activity in the catalytic mechanism.

Homodimer.

It is found in the cytoplasm. It carries out the reaction D-fructose 6-phosphate + L-glutamine = D-glucosamine 6-phosphate + L-glutamate. Its function is as follows. Catalyzes the first step in hexosamine metabolism, converting fructose-6P into glucosamine-6P using glutamine as a nitrogen source. This is Glutamine--fructose-6-phosphate aminotransferase [isomerizing] from Haemophilus ducreyi (strain 35000HP / ATCC 700724).